Consider the following 512-residue polypeptide: Apolipoprotein N-acyltransferase (512 aa).

6 helical membrane-spanning segments follow: residues 5-25 (LDKY…FAAA), 56-76 (FAVS…FYWI), 92-112 (VPLT…CFWL), 118-138 (LPRG…TEFA), 168-188 (LGGI…LVLA), and 195-215 (SGKR…GYTA). One can recognise a CN hydrolase domain in the interval 233–477 (LQGNIDQTLK…ETVLEGHIKG (245 aa)). Catalysis depends on Glu271, which acts as the Proton acceptor. Lys337 is a catalytic residue. Cys389 acts as the Nucleophile in catalysis. The chain crosses the membrane as a helical span at residues 487-507 (TGSSWWLMGILALAALILFIF).

This sequence belongs to the CN hydrolase family. Apolipoprotein N-acyltransferase subfamily.

It is found in the cell inner membrane. It catalyses the reaction N-terminal S-1,2-diacyl-sn-glyceryl-L-cysteinyl-[lipoprotein] + a glycerophospholipid = N-acyl-S-1,2-diacyl-sn-glyceryl-L-cysteinyl-[lipoprotein] + a 2-acyl-sn-glycero-3-phospholipid + H(+). It functions in the pathway protein modification; lipoprotein biosynthesis (N-acyl transfer). In terms of biological role, catalyzes the phospholipid dependent N-acylation of the N-terminal cysteine of apolipoprotein, the last step in lipoprotein maturation. This is Apolipoprotein N-acyltransferase from Neisseria meningitidis serogroup B (strain ATCC BAA-335 / MC58).